Reading from the N-terminus, the 186-residue chain is UPF0397 protein LCABL_04350 (186 aa).

Helical transmembrane passes span 12 to 32, 45 to 65, 77 to 97, 112 to 132, and 150 to 170; these read VVAIGIGTAILFILKRFAVIP, GFLGFIATLFGPIAGFFIGFL, TPWWTWVFTTGLVGMVIGLFW, IVSFNLLQIITNVVSWSLIAP, and GIVSAISNSIATGVIGTILLV.

Belongs to the UPF0397 family.

The protein resides in the cell membrane. The chain is UPF0397 protein LCABL_04350 from Lacticaseibacillus casei (strain BL23) (Lactobacillus casei).